A 147-amino-acid chain; its full sequence is Hemoglobin subunit gamma-1 (147 aa).

Residues Asn-3–His-147 enclose the Globin domain. Thr-13 bears the Phosphothreonine mark. Ser-45, Ser-51, and Ser-53 each carry phosphoserine. At Lys-60 the chain carries N6-acetyllysine. His-64 provides a ligand contact to heme b. N6-acetyllysine is present on Lys-83. His-93 is a binding site for heme b. Cys-94 is subject to S-nitrosocysteine. The residue at position 140 (Ser-140) is a Phosphoserine.

Belongs to the globin family. As to quaternary structure, heterotetramer of two alpha chains and two gamma chains in fetal hemoglobin (Hb F). As to expression, red blood cells.

Gamma chains make up the fetal hemoglobin F, in combination with alpha chains. This Sapajus apella (Brown-capped capuchin) protein is Hemoglobin subunit gamma-1 (HBG1).